The primary structure comprises 175 residues: Putative lipoprotein LppN (175 aa).

Positions 1–20 (MRLPGRHVLYALSAVTMLAA) are cleaved as a signal peptide. Cys21 is lipidated: N-palmitoyl cysteine. Residue Cys21 is the site of S-diacylglycerol cysteine attachment. The disordered stretch occupies residues 31–56 (ASTNMNPTNPPATAETATVSPTPAPQ). Positions 33-48 (TNMNPTNPPATAETAT) are enriched in low complexity. 3 prevents bacterial uptake by a human macrophage-like cell line regions span residues 61–80 (ETWINLQVGDCLADLPPADL), 101–120 (RAPVAVDAAVVSMANRDCAA), and 121–140 (GFAPYTGQSVDTSPYSVAYL).

The protein resides in the cell membrane. It is found in the cell surface. Its function is as follows. Probably involved in bacterial recognition and uptake by its host (human). In Mycobacterium tuberculosis (strain ATCC 25618 / H37Rv), this protein is Putative lipoprotein LppN (lppN).